The following is a 206-amino-acid chain: dITP/XTP pyrophosphatase (206 aa).

S7–K12 contacts substrate. D72 functions as the Proton acceptor in the catalytic mechanism. Residue D72 coordinates Mg(2+). Substrate-binding positions include S73, F155–D158, K182, and H187–R188.

The protein belongs to the HAM1 NTPase family. Homodimer. It depends on Mg(2+) as a cofactor.

It catalyses the reaction XTP + H2O = XMP + diphosphate + H(+). It carries out the reaction dITP + H2O = dIMP + diphosphate + H(+). The enzyme catalyses ITP + H2O = IMP + diphosphate + H(+). In terms of biological role, pyrophosphatase that catalyzes the hydrolysis of nucleoside triphosphates to their monophosphate derivatives, with a high preference for the non-canonical purine nucleotides XTP (xanthosine triphosphate), dITP (deoxyinosine triphosphate) and ITP. Seems to function as a house-cleaning enzyme that removes non-canonical purine nucleotides from the nucleotide pool, thus preventing their incorporation into DNA/RNA and avoiding chromosomal lesions. In Corynebacterium glutamicum (strain ATCC 13032 / DSM 20300 / JCM 1318 / BCRC 11384 / CCUG 27702 / LMG 3730 / NBRC 12168 / NCIMB 10025 / NRRL B-2784 / 534), this protein is dITP/XTP pyrophosphatase.